Reading from the N-terminus, the 307-residue chain is Lipoyl synthase (307 aa).

Residues C55, C60, C66, C81, C85, C88, and S292 each contribute to the [4Fe-4S] cluster site. Positions 67 to 281 constitute a Radical SAM core domain; it reads WEDREATFLI…ARHAEELGFS (215 aa).

The protein belongs to the radical SAM superfamily. Lipoyl synthase family. [4Fe-4S] cluster is required as a cofactor.

It is found in the cytoplasm. The enzyme catalyses [[Fe-S] cluster scaffold protein carrying a second [4Fe-4S](2+) cluster] + N(6)-octanoyl-L-lysyl-[protein] + 2 oxidized [2Fe-2S]-[ferredoxin] + 2 S-adenosyl-L-methionine + 4 H(+) = [[Fe-S] cluster scaffold protein] + N(6)-[(R)-dihydrolipoyl]-L-lysyl-[protein] + 4 Fe(3+) + 2 hydrogen sulfide + 2 5'-deoxyadenosine + 2 L-methionine + 2 reduced [2Fe-2S]-[ferredoxin]. It functions in the pathway protein modification; protein lipoylation via endogenous pathway; protein N(6)-(lipoyl)lysine from octanoyl-[acyl-carrier-protein]: step 2/2. In terms of biological role, catalyzes the radical-mediated insertion of two sulfur atoms into the C-6 and C-8 positions of the octanoyl moiety bound to the lipoyl domains of lipoate-dependent enzymes, thereby converting the octanoylated domains into lipoylated derivatives. This is Lipoyl synthase from Mycobacterium avium (strain 104).